Reading from the N-terminus, the 158-residue chain is Protein Smg homolog (158 aa).

It belongs to the Smg family.

The chain is Protein Smg homolog from Herminiimonas arsenicoxydans.